The primary structure comprises 225 residues: UPF0758 protein Sden_0326 (225 aa).

The region spanning 102–224 is the MPN domain; sequence ILTNPDLTRD…IVSFAERGWL (123 aa). Histidine 173, histidine 175, and aspartate 186 together coordinate Zn(2+). Positions 173 to 186 match the JAMM motif motif; sequence HNHPSGIAEPSQAD.

It belongs to the UPF0758 family.

The sequence is that of UPF0758 protein Sden_0326 from Shewanella denitrificans (strain OS217 / ATCC BAA-1090 / DSM 15013).